The sequence spans 480 residues: Ribosome assembly protein rrb1 (480 aa).

2 disordered regions span residues 1–78 (MSKR…WLPG) and 155–176 (QHDE…ILEH). 2 stretches are compositionally biased toward acidic residues: residues 28–52 (VDTE…YIEA) and 158–172 (ENDD…EEDP). Phosphoserine occurs at positions 163 and 166. 5 WD repeats span residues 183-225 (GACN…RSLD), 289-329 (SHTA…KTSA), 334-375 (AHPG…SSSS), 385-425 (WHRA…DEEE), and 446-480 (MGQQ…TITF).

Associates with ribosomal protein L3.

The protein resides in the cytoplasm. It is found in the nucleus. It localises to the nucleolus. Involved in regulation of L3 expression and stability and plays a role in early 60S ribosomal subunit assembly. May be required for proper assembly of pre-ribosomal particles during early ribosome biogenesis, presumably by targeting L3 onto the 35S precursor rRNA. The protein is Ribosome assembly protein rrb1 (rrb1) of Schizosaccharomyces pombe (strain 972 / ATCC 24843) (Fission yeast).